The sequence spans 123 residues: Probable non-functional immunoglobulin lambda variable 11-55 (123 aa).

The signal sequence occupies residues 1-19; that stretch reads MALTPLLLLLLSHCTGSLS. Residues 20 to 44 form a framework-1 region; it reads RPVLTQPPSLSASPGATARLPCTLS. An Ig-like domain is found at 21–123; that stretch reads PVLTQPPSLS…YCQVYESSAN (103 aa). The cysteines at positions 41 and 115 are disulfide-linked. The interval 45-53 is complementarity-determining-1; that stretch reads SDLSVGGKN. Residues 54–70 form a framework-2 region; the sequence is MFWYQQKLGSSPRLFLY. A complementarity-determining-2 region spans residues 71 to 77; sequence HYSDSDK. Residues 78 to 115 form a framework-3 region; that stretch reads QLGPGVPSRVSGSKETSSNTAFLLISGLQPEDEADYYC. The complementarity-determining-3 stretch occupies residues 116 to 123; the sequence is QVYESSAN.

In terms of assembly, immunoglobulins are composed of two identical heavy chains and two identical light chains; disulfide-linked.

It is found in the secreted. It localises to the cell membrane. In terms of biological role, probable non-functional open reading frame (ORF) of V region of the variable domain of immunoglobulin light chains. Non-functional ORF generally cannot participate in the synthesis of a productive immunoglobulin chain due to altered V-(D)-J or switch recombination and/or splicing site (at mRNA level) and/or conserved amino acid change (protein level). Immunoglobulins, also known as antibodies, are membrane-bound or secreted glycoproteins produced by B lymphocytes. In the recognition phase of humoral immunity, the membrane-bound immunoglobulins serve as receptors which, upon binding of a specific antigen, trigger the clonal expansion and differentiation of B lymphocytes into immunoglobulins-secreting plasma cells. Secreted immunoglobulins mediate the effector phase of humoral immunity, which results in the elimination of bound antigens. The antigen binding site is formed by the variable domain of one heavy chain, together with that of its associated light chain. Thus, each immunoglobulin has two antigen binding sites with remarkable affinity for a particular antigen. The variable domains are assembled by a process called V-(D)-J rearrangement and can then be subjected to somatic hypermutations which, after exposure to antigen and selection, allow affinity maturation for a particular antigen. The protein is Probable non-functional immunoglobulin lambda variable 11-55 of Homo sapiens (Human).